Reading from the N-terminus, the 475-residue chain is ATP synthase subunit beta (475 aa).

148–155 provides a ligand contact to ATP; it reads GGAGVGKT.

Belongs to the ATPase alpha/beta chains family. F-type ATPases have 2 components, CF(1) - the catalytic core - and CF(0) - the membrane proton channel. CF(1) has five subunits: alpha(3), beta(3), gamma(1), delta(1), epsilon(1). CF(0) has three main subunits: a(1), b(2) and c(9-12). The alpha and beta chains form an alternating ring which encloses part of the gamma chain. CF(1) is attached to CF(0) by a central stalk formed by the gamma and epsilon chains, while a peripheral stalk is formed by the delta and b chains.

It localises to the cell inner membrane. It catalyses the reaction ATP + H2O + 4 H(+)(in) = ADP + phosphate + 5 H(+)(out). Produces ATP from ADP in the presence of a proton gradient across the membrane. The catalytic sites are hosted primarily by the beta subunits. The protein is ATP synthase subunit beta of Psychrobacter sp. (strain PRwf-1).